Here is a 368-residue protein sequence, read N- to C-terminus: Homoserine O-acetyltransferase (368 aa).

The region spanning 44 to 350 is the AB hydrolase-1 domain; that stretch reads NAILVAHAWT…AYGHDAFLLE (307 aa). The active-site Nucleophile is the Ser150. Arg217 contributes to the substrate binding site. Catalysis depends on residues Asp311 and His344. Asp345 is a binding site for substrate.

This sequence belongs to the AB hydrolase superfamily. MetX family. Homodimer.

It localises to the cytoplasm. It carries out the reaction L-homoserine + acetyl-CoA = O-acetyl-L-homoserine + CoA. Its pathway is amino-acid biosynthesis; L-methionine biosynthesis via de novo pathway; O-acetyl-L-homoserine from L-homoserine: step 1/1. Transfers an acetyl group from acetyl-CoA to L-homoserine, forming acetyl-L-homoserine. The polypeptide is Homoserine O-acetyltransferase (Geobacter sulfurreducens (strain ATCC 51573 / DSM 12127 / PCA)).